Reading from the N-terminus, the 461-residue chain is MESSVKASVDSETESSPGVNETAAASGQRLSEKTRQQADQPKTQDDLVEQNSSYVQDSPSKKRKLDVEIILDEKHSEDDGGASKRSKLERGGGSEDEPSPGGLTERKRKLQPQDALETQTRKFQKLEEGHSSAVAAHYNELQEVGLVKRSQSRIFYLRNFNNWIKSILIGEILEKVRQRKNRDITVLDLGCGKGGDLLKWRKGRISRLVCADIADISMKQCQQRYEDMKCRRDNEYIFSAEFITADCSKELLVEKFHDPEMYFDICSCQFACHYSFESLEQADMMLRNACGRLNPGGYFIGTTPNSFELIRRLEASETESFGNEIYTVKFQKKGNYPLFGCKYDFNLEGVVDVPEFLVYFPLLTEMAKKYNMKLIYKKTFLEFYEEKIKNNENKMLLKRMQALESYPANENSKLASEKAGDYAHAAEYMKNSQVRLPLGTLSKSEWEATSIYLVFAFEKQQ.

The interval 1–117 (MESSVKASVD…RKLQPQDALE (117 aa)) is disordered. 4 positions are modified to phosphoserine: S11, S15, S16, and S58. 2 stretches are compositionally biased toward polar residues: residues 14-29 (ESSP…SGQR) and 49-58 (EQNSSYVQDS). Residues 65 to 93 (LDVEIILDEKHSEDDGGASKRSKLERGGG) show a composition bias toward basic and acidic residues. Phosphoserine occurs at positions 94 and 99. The Nuclear localization signal motif lies at 107 to 109 (KRK). In terms of domain architecture, mRNA cap 0 methyltransferase spans 152 to 460 (SRIFYLRNFN…IYLVFAFEKQ (309 aa)). MRNA is bound at residue 161 to 162 (NN). Positions 165, 190, 212, 246, 269, and 274 each coordinate S-adenosyl-L-methionine.

Belongs to the class I-like SAM-binding methyltransferase superfamily. mRNA cap 0 methyltransferase family. Interacts with importin alpha, leading to stimulate both RNA-binding and methyltransferase activity. Interaction with importin alpha and beta is required for its nuclear localization, importin beta dissociating in response to RanGTP, allowing RNMT-importin alpha to bind RNA substrates. Interacts with elongating form of polymerase II and RNGTT. Interacts with RAMAC, this interaction significantly enhances RNA-binding and cap methyltransferase activity.

Its subcellular location is the nucleus. It carries out the reaction a 5'-end (5'-triphosphoguanosine)-ribonucleoside in mRNA + S-adenosyl-L-methionine = a 5'-end (N(7)-methyl 5'-triphosphoguanosine)-ribonucleoside in mRNA + S-adenosyl-L-homocysteine. With respect to regulation, methyltransferase activity is activated by RAMAC. Its function is as follows. Catalytic subunit of the mRNA-capping methyltransferase RNMT:RAMAC complex that methylates the N7 position of the added guanosine to the 5'-cap structure of mRNAs. Binds RNA containing 5'-terminal GpppC. The sequence is that of mRNA cap guanine-N(7) methyltransferase (Rnmt) from Rattus norvegicus (Rat).